The following is a 185-amino-acid chain: Regulatory protein RecX (185 aa).

This sequence belongs to the RecX family.

Its subcellular location is the cytoplasm. In terms of biological role, modulates RecA activity. This is Regulatory protein RecX from Thermobifida fusca (strain YX).